The chain runs to 399 residues: Phosphoglycerate kinase (399 aa).

Substrate contacts are provided by residues 22 to 24 (DFN), arginine 38, 61 to 64 (HLGR), arginine 120, and arginine 153. ATP contacts are provided by residues lysine 204, glutamate 326, and 352 to 355 (GGDT).

It belongs to the phosphoglycerate kinase family. In terms of assembly, monomer.

It localises to the cytoplasm. The enzyme catalyses (2R)-3-phosphoglycerate + ATP = (2R)-3-phospho-glyceroyl phosphate + ADP. It functions in the pathway carbohydrate degradation; glycolysis; pyruvate from D-glyceraldehyde 3-phosphate: step 2/5. The polypeptide is Phosphoglycerate kinase (Citrifermentans bemidjiense (strain ATCC BAA-1014 / DSM 16622 / JCM 12645 / Bem) (Geobacter bemidjiensis)).